The following is a 59-amino-acid chain: UPF0434 protein Ping_0902 (59 aa).

This sequence belongs to the UPF0434 family.

In Psychromonas ingrahamii (strain DSM 17664 / CCUG 51855 / 37), this protein is UPF0434 protein Ping_0902.